The primary structure comprises 239 residues: Adapter protein MecA (239 aa).

Residues 118–128 show a composition bias toward basic and acidic residues; sequence EQRTKEKEAQG. Residues 118–137 form a disordered region; that stretch reads EQRTKEKEAQGSKRQKSSAR.

It belongs to the MecA family. Homodimer.

Functionally, enables the recognition and targeting of unfolded and aggregated proteins to the ClpC protease or to other proteins involved in proteolysis. This chain is Adapter protein MecA, found in Staphylococcus aureus (strain USA300).